A 151-amino-acid polypeptide reads, in one-letter code: Ribosome maturation factor RimP (151 aa).

It belongs to the RimP family.

It localises to the cytoplasm. Required for maturation of 30S ribosomal subunits. In Colwellia psychrerythraea (strain 34H / ATCC BAA-681) (Vibrio psychroerythus), this protein is Ribosome maturation factor RimP.